Consider the following 76-residue polypeptide: ATP synthase subunit 9, mitochondrial (76 aa).

Transmembrane regions (helical) follow at residues 13–35 and 50–72; these read GIST…ALIQ and FAIL…SFLL.

Belongs to the ATPase C chain family. In terms of assembly, F-type ATPases have 2 components, CF(1) - the catalytic core - and CF(0) - the membrane proton channel. In yeast, the dimeric form of ATP synthase consists of 18 polypeptides: alpha, beta, gamma, delta, epsilon, 4 (B), 5 (OSCP), 6 (A), 8, 9 (C), d, E (Tim11), f, g, h, i, j and k.

The protein localises to the mitochondrion membrane. Its function is as follows. Mitochondrial membrane ATP synthase (F(1)F(0) ATP synthase or Complex V) produces ATP from ADP in the presence of a proton gradient across the membrane which is generated by electron transport complexes of the respiratory chain. F-type ATPases consist of two structural domains, F(1) - containing the extramembraneous catalytic core and F(0) - containing the membrane proton channel, linked together by a central stalk and a peripheral stalk. During catalysis, ATP synthesis in the catalytic domain of F(1) is coupled via a rotary mechanism of the central stalk subunits to proton translocation. Part of the complex F(0) domain. A homomeric c-ring of probably 10 subunits is part of the complex rotary element. The chain is ATP synthase subunit 9, mitochondrial (ATP9) from Eremothecium gossypii (strain ATCC 10895 / CBS 109.51 / FGSC 9923 / NRRL Y-1056) (Yeast).